The following is a 24-amino-acid chain: Cytochrome c3-2 (24 aa).

Positions 1-24 (GNAPAADMVLKAPGDAKMTKTAVP) are disordered.

Binds 4 heme groups per subunit.

It localises to the periplasm. Participates in sulfate respiration coupled with phosphorylation by transferring electrons from the enzyme dehydrogenase to ferredoxin. The polypeptide is Cytochrome c3-2 (Nitratidesulfovibrio vulgaris (Desulfovibrio vulgaris)).